A 189-amino-acid polypeptide reads, in one-letter code: Large ribosomal subunit protein eL18 (189 aa).

Belongs to the eukaryotic ribosomal protein eL18 family.

The protein resides in the cytoplasm. The chain is Large ribosomal subunit protein eL18 (RpL18) from Aedes aegypti (Yellowfever mosquito).